Reading from the N-terminus, the 208-residue chain is TnpB-like protein MJ0012 (208 aa).

4 residues coordinate Zn(2+): Cys83, Cys86, Cys100, and Cys103.

It belongs to the transposase 35 family.

This Methanocaldococcus jannaschii (strain ATCC 43067 / DSM 2661 / JAL-1 / JCM 10045 / NBRC 100440) (Methanococcus jannaschii) protein is TnpB-like protein MJ0012.